The following is a 569-amino-acid chain: Putative ABC transporter ATP-binding protein TTE1589 (569 aa).

ABC transporter domains follow at residues 8 to 248 (IIVK…IGLM) and 309 to 542 (IQAK…LSLK). ATP is bound by residues 43–50 (GPSGAGKS) and 342–349 (GHNGSGKT).

This sequence belongs to the ABC transporter superfamily.

Its subcellular location is the cell membrane. Its function is as follows. Probably part of an ABC transporter complex. Responsible for energy coupling to the transport system. This Caldanaerobacter subterraneus subsp. tengcongensis (strain DSM 15242 / JCM 11007 / NBRC 100824 / MB4) (Thermoanaerobacter tengcongensis) protein is Putative ABC transporter ATP-binding protein TTE1589.